The chain runs to 253 residues: Dihydroanticapsin 7-dehydrogenase (253 aa).

9-31 (LITGGASGIGYAAVQAFLGQQAN) provides a ligand contact to NAD(+). Serine 139 is a binding site for substrate. Tyrosine 152 functions as the Proton acceptor in the catalytic mechanism.

Belongs to the short-chain dehydrogenases/reductases (SDR) family.

It carries out the reaction L-dihydroanticapsin + NAD(+) = L-anticapsin + NADH + H(+). It functions in the pathway antibiotic biosynthesis; bacilysin biosynthesis. Its function is as follows. Part of the bacABCDEFG operon responsible for the biosynthesis of bacilysin, an irreversible inactivator of the glutaminase domain of glucosamine synthetase. Catalyzes the dehydrogenation of the C7-hydroxyl group in the 4S-tetrahydrotyrosine (4S-H4Tyr) to yield anticapsin (epoxycyclohexanonyl-Ala). It is not able to oxidize the 4R-H4Tyr diastereomer and the dihydrobacilysin dipeptide (L-Ala-4S-H4Tyr dipeptide). The chain is Dihydroanticapsin 7-dehydrogenase from Bacillus subtilis (strain 168).